Reading from the N-terminus, the 816-residue chain is Phosphatidylinositol 4-kinase beta (816 aa).

Disordered stretches follow at residues 1–30, 101–120, and 250–318; these read MGDM…GSLL, EDEM…RRRR, and RKRE…SFSS. Residue G2 is modified to N-acetylglycine. Residues 2–68 are interaction with ACBD3; that stretch reads GDMVVEPATL…VKLLHGGVAI (67 aa). Over residues 10–30 the composition is skewed to low complexity; sequence TLKPTSEPTPSPSGNNGGSLL. Residues 52 to 242 enclose the PIK helical domain; it reads CQEVLEKVKL…GTKLRKLILS (191 aa). At S258 the chain carries Phosphoserine. At T263 the chain carries Phosphothreonine. A phosphoserine mark is found at S266, S275, S277, S284, and S294. Composition is skewed to polar residues over residues 278–297 and 306–318; these read DATA…SNPK and SSST…SFSS. S428 is subject to Phosphoserine. Phosphothreonine is present on T438. The residue at position 511 (S511) is a Phosphoserine. Phosphothreonine occurs at positions 517 and 519. One can recognise a PI3K/PI4K catalytic domain in the interval 535-801; sequence EPWQEKVRRI…MVDGSMRSIT (267 aa). The tract at residues 541-547 is G-loop; sequence VRRIREG. A catalytic loop region spans residues 668-676; sequence QVKDRHNGN. Positions 687-711 are activation loop; that stretch reads HIDFGFILSSSPRNLGFETSAFKLT.

The protein belongs to the PI3/PI4-kinase family. Type III PI4K subfamily. In terms of assembly, interacts with ARF1 and ARF3 in the Golgi complex, but not with ARF4, ARF5 or ARF6. Interacts with NCS1/FREQ in a calcium-independent manner. Interacts with CALN1/CABP8 and CALN2/CABP7; in a calcium-dependent manner; this interaction competes with NCS1/FREQ binding. Interacts with ACBD3. Interacts with ARMH3, YWHAB, YWHAE, YWHAG, YWHAH, YWHAQ, YWHAZ and SFN. Interacts with GGA2 (via VHS domain); the interaction is important for PI4KB location at the Golgi apparatus membrane. Interacts with ATG9A. It depends on Mg(2+) as a cofactor. The cofactor is Mn(2+).

It is found in the endomembrane system. Its subcellular location is the mitochondrion outer membrane. It localises to the rough endoplasmic reticulum membrane. The protein resides in the golgi apparatus. The protein localises to the golgi apparatus membrane. The enzyme catalyses a 1,2-diacyl-sn-glycero-3-phospho-(1D-myo-inositol) + ATP = a 1,2-diacyl-sn-glycero-3-phospho-(1D-myo-inositol 4-phosphate) + ADP + H(+). Its activity is regulated as follows. Inhibited by wortmannin. Increased kinase activity upon interaction with NCS1/FREQ. In terms of biological role, phosphorylates phosphatidylinositol (PI) in the first committed step in the production of the second messenger inositol-1,4,5,-trisphosphate (PIP). May regulate Golgi disintegration/reorganization during mitosis, possibly via its phosphorylation. Involved in Golgi-to-plasma membrane trafficking. May play an important role in the inner ear development. This chain is Phosphatidylinositol 4-kinase beta (Pi4kb), found in Mus musculus (Mouse).